A 412-amino-acid polypeptide reads, in one-letter code: MYEVTKFGGEGKRLEDYREIIGDEALEAIKAKAENLKDKSFVHVNSTSFGGGVAEILHNLVPLMRDVGIDARWFVIEGTNEFFNVTKSFHNALQGNKELRLTEEMKKLYLEINKKNAEDIDLTQFDYVLIHDPQPAPLIEFYEKRQPWIWRCHIDLSDPNLEFWKFLRQFVEKYDRYIFHMEEYVQEDLNQEKVVIMPPSIDPLSEKNMELSESEILKTLERFDVDPERPIITQVARFDPWKGVFDVIDVYRKVKEKIPEVQLLLVGVMAHDDPEGWIYFEKTLRKIGEDYDIKVLTNLTGVHAREVNAFQRASDVILQMSIREGFGLTVTEAMWKEKPVVGRAVGGIKLQIVDGKTGFLVKDVNDAIEKTLYLLEHKDVAQEMGKNAKERIKENFIITKHLERYLDLLNSF.

It belongs to the glycosyltransferase group 1 family. Glycosyltransferase 4 subfamily. In terms of assembly, homodimer. It depends on Mg(2+) as a cofactor.

The catalysed reaction is an NDP-alpha-D-glucose + D-glucose = alpha,alpha-trehalose + a ribonucleoside 5'-diphosphate + H(+). Functionally, synthesizes trehalose from ADP-glucose and glucose. Has a much lower activity toward UDP-glucose and GDP-glucose. The reaction is reversible, the equilibrium strongly favors trehalose synthesis. The protein is Trehalose synthase of Pyrococcus furiosus (strain ATCC 43587 / DSM 3638 / JCM 8422 / Vc1).